Consider the following 259-residue polypeptide: Probable ABC transporter permease protein RBE_1340 (259 aa).

Transmembrane regions (helical) follow at residues 25-45 (IFSLAAITSIIRPPLYFSLII), 49-69 (LFIGFYSLPVVAMTTFFSGAV), 148-168 (VIAAIITMPCLVLIGDVIGVM), 195-215 (PIDVISGLVKAGVFGFIISII), and 237-257 (AVVNSSILILISNYLITELFF).

This sequence belongs to the MlaE permease family.

The protein localises to the cell inner membrane. Could be part of an ABC transporter complex. This is Probable ABC transporter permease protein RBE_1340 from Rickettsia bellii (strain RML369-C).